Here is a 170-residue protein sequence, read N- to C-terminus: ATP synthase subunit b (170 aa).

Residues 3–23 (IKILFFLALPFLAYASEHGGT) form a helical membrane-spanning segment.

It belongs to the ATPase B chain family. As to quaternary structure, F-type ATPases have 2 components, F(1) - the catalytic core - and F(0) - the membrane proton channel. F(1) has five subunits: alpha(3), beta(3), gamma(1), delta(1), epsilon(1). F(0) has three main subunits: a(1), b(2) and c(10-14). The alpha and beta chains form an alternating ring which encloses part of the gamma chain. F(1) is attached to F(0) by a central stalk formed by the gamma and epsilon chains, while a peripheral stalk is formed by the delta and b chains.

The protein resides in the cell inner membrane. F(1)F(0) ATP synthase produces ATP from ADP in the presence of a proton or sodium gradient. F-type ATPases consist of two structural domains, F(1) containing the extramembraneous catalytic core and F(0) containing the membrane proton channel, linked together by a central stalk and a peripheral stalk. During catalysis, ATP synthesis in the catalytic domain of F(1) is coupled via a rotary mechanism of the central stalk subunits to proton translocation. In terms of biological role, component of the F(0) channel, it forms part of the peripheral stalk, linking F(1) to F(0). The polypeptide is ATP synthase subunit b (Campylobacter concisus (strain 13826)).